A 344-amino-acid polypeptide reads, in one-letter code: Phosphate acyltransferase (344 aa).

Belongs to the PlsX family. Homodimer. Probably interacts with PlsY.

It localises to the cytoplasm. The catalysed reaction is a fatty acyl-[ACP] + phosphate = an acyl phosphate + holo-[ACP]. It participates in lipid metabolism; phospholipid metabolism. Catalyzes the reversible formation of acyl-phosphate (acyl-PO(4)) from acyl-[acyl-carrier-protein] (acyl-ACP). This enzyme utilizes acyl-ACP as fatty acyl donor, but not acyl-CoA. In Acaryochloris marina (strain MBIC 11017), this protein is Phosphate acyltransferase.